The primary structure comprises 82 residues: Sec-independent protein translocase protein TatA (82 aa).

A helical membrane pass occupies residues 1 to 21 (MGIFDWKHWIVILIVVVLVFG). The segment at 43–82 (VNTEEDDKKDQPAAQPAQPLNQPHTIDAQAQKVEEPARKD) is disordered.

This sequence belongs to the TatA/E family. The Tat system comprises two distinct complexes: a TatABC complex, containing multiple copies of TatA, TatB and TatC subunits, and a separate TatA complex, containing only TatA subunits. Substrates initially bind to the TatABC complex, which probably triggers association of the separate TatA complex to form the active translocon.

It is found in the cell inner membrane. Functionally, part of the twin-arginine translocation (Tat) system that transports large folded proteins containing a characteristic twin-arginine motif in their signal peptide across membranes. TatA could form the protein-conducting channel of the Tat system. The sequence is that of Sec-independent protein translocase protein TatA from Pseudomonas aeruginosa (strain LESB58).